We begin with the raw amino-acid sequence, 184 residues long: Probable chemoreceptor glutamine deamidase CheD (184 aa).

The protein belongs to the CheD family.

It catalyses the reaction L-glutaminyl-[protein] + H2O = L-glutamyl-[protein] + NH4(+). Its function is as follows. Probably deamidates glutamine residues to glutamate on methyl-accepting chemotaxis receptors (MCPs), playing an important role in chemotaxis. The protein is Probable chemoreceptor glutamine deamidase CheD of Rhizobium johnstonii (strain DSM 114642 / LMG 32736 / 3841) (Rhizobium leguminosarum bv. viciae).